The following is a 239-amino-acid chain: Large ribosomal subunit protein eL32 (239 aa).

2 stretches are compositionally biased toward acidic residues: residues 1–12 and 67–91; these read MSDENDTPEELA and VEADTDAEVEEVGGDDEADTDADVE. Disordered stretches follow at residues 1–23 and 64–178; these read MSDENDTPEELADISGVGPSKAE and GLEV…HPSG. Basic and acidic residues predominate over residues 92–113; it reads TELRARGLTEKTPDLSEDEQRL. Over residues 130 to 155 the composition is skewed to basic residues; it reads YHKKKRTPTSWRRPKGTLSKQRRGIK.

The protein belongs to the eukaryotic ribosomal protein eL32 family.

The chain is Large ribosomal subunit protein eL32 (rpl32e) from Halobacterium salinarum (strain ATCC 700922 / JCM 11081 / NRC-1) (Halobacterium halobium).